Reading from the N-terminus, the 84-residue chain is MSILSFLLGEKKKSASVAKERLQLIIAHERVGGRPPADYLPALQKELVAVISKYVHISDDDIRVSLERQDDLEVLEVKIEIPQA.

This sequence belongs to the MinE family.

Prevents the cell division inhibition by proteins MinC and MinD at internal division sites while permitting inhibition at polar sites. This ensures cell division at the proper site by restricting the formation of a division septum at the midpoint of the long axis of the cell. The chain is Cell division topological specificity factor from Burkholderia cenocepacia (strain HI2424).